We begin with the raw amino-acid sequence, 155 residues long: Ribonuclease H (155 aa).

Residues 4–145 enclose the RNase H type-1 domain; the sequence is DISKVVIYTD…ADKLAVQGRQ (142 aa). Mg(2+) contacts are provided by D13, E51, D73, and D137.

The protein belongs to the RNase H family. In terms of assembly, monomer. Mg(2+) serves as cofactor.

Its subcellular location is the cytoplasm. The enzyme catalyses Endonucleolytic cleavage to 5'-phosphomonoester.. In terms of biological role, endonuclease that specifically degrades the RNA of RNA-DNA hybrids. The protein is Ribonuclease H of Rickettsia bellii (strain RML369-C).